Here is a 187-residue protein sequence, read N- to C-terminus: Ribosome-recycling factor (187 aa).

Belongs to the RRF family.

It is found in the cytoplasm. In terms of biological role, responsible for the release of ribosomes from messenger RNA at the termination of protein biosynthesis. May increase the efficiency of translation by recycling ribosomes from one round of translation to another. The protein is Ribosome-recycling factor of Xanthobacter autotrophicus (strain ATCC BAA-1158 / Py2).